Reading from the N-terminus, the 500-residue chain is MLNINFVNEESSTNQGLIVFIDEQLKLNNNLIALDQQHYELISKTIQNKLQFSGNYGQITVVPSVIKSCAVKYLIIVGLGNVEKLTEAKIEELGGKILQHATCAKIATIGLKIINRINRFTSPTFTSLIASGAFLASYRFHKYKTTLKEVEKFAVESIEILTDNNSEAMKLFEVKKLIAEAVFFTRDISNEPSNIKTPQVYAERIVEILEPLGVNIDVIGEHDIKNLGMGALLGVGQGSQNESKLVVMEYKGGSRDDSTLALVGKGVIFDTGGISLKPSSNMHLMRYDMAGSAAVVGTIIALASQKVPVNVVGVVGLVENMQSGNAQRPGDVVVTMSGQTAEVLNTDAEGRLVLADTVWYVQEKFNPKCVIDVATLTGAITVALGSTYAGCFSNNDELADKLIKAGEAVNEKLWRMPLHDDYDAMINSDIADIANIGNVPGAAGSCTAAHFIKRFIKDGVDWAHLDIAGVANSNNASALCPKGAVGYGVRLLEKFIKEYN.

Positions 265 and 270 each coordinate Mn(2+). The active site involves Lys-277. Mn(2+)-binding residues include Asp-288, Asp-347, and Glu-349. Arg-351 is an active-site residue.

Belongs to the peptidase M17 family. Requires Mn(2+) as cofactor.

It localises to the cytoplasm. It catalyses the reaction Release of an N-terminal amino acid, Xaa-|-Yaa-, in which Xaa is preferably Leu, but may be other amino acids including Pro although not Arg or Lys, and Yaa may be Pro. Amino acid amides and methyl esters are also readily hydrolyzed, but rates on arylamides are exceedingly low.. The enzyme catalyses Release of an N-terminal amino acid, preferentially leucine, but not glutamic or aspartic acids.. Functionally, presumably involved in the processing and regular turnover of intracellular proteins. Catalyzes the removal of unsubstituted N-terminal amino acids from various peptides. The polypeptide is Cytosol aminopeptidase (pepA) (Rickettsia prowazekii (strain Madrid E)).